The sequence spans 451 residues: GABA transporter 1 (451 aa).

11 helical membrane passes run 35 to 55, 57 to 77, 115 to 135, 153 to 173, 182 to 202, 222 to 242, 262 to 282, 308 to 328, 356 to 376, 382 to 402, and 411 to 431; these read CGFH…PYAF, FLGW…TFYS, VGPI…LLGG, LFEF…FPSF, LSLL…IYIG, VFGI…GIIP, MCYL…YWAF, FIFL…VVYL, LVVR…LPFF, LLGA…FFNF, and FIFW…VIAM.

Belongs to the amino acid/polyamine transporter 2 family. Amino acid/auxin permease (AAAP) (TC 2.A.18.2) subfamily. As to expression, highly expressed in flowers and at lower levels in roots, leaves and stems.

The protein resides in the cell membrane. Its function is as follows. High affinity gamma-aminobutyric acid (GABA) transporter probably involved in GABA uptake into cells. When expressed in a heterologous system (Xenopus oocytes), imports GABA, butylamine, beta- and L-Alanine, 5-aminovaleric acid, 6-aminocaproic acid and 8-aminocaprylic acid, but does not mediate the transport of proline or glycine betaine. In Arabidopsis thaliana (Mouse-ear cress), this protein is GABA transporter 1 (GAT1).